Consider the following 450-residue polypeptide: Putative MYST-like histone acetyltransferase 1 (450 aa).

The Tudor-knot domain occupies 63–122 (LEVGTRVMCRWRDQKLHPVKVIERRKSSTSSSPADYEYYVHYTEFNRRLDEWVKLEQLDL). The 272-residue stretch at 174–445 (TKVKNIAKIE…VDVSKLIWTP (272 aa)) folds into the MYST-type HAT domain. The C2HC MYST-type zinc finger occupies 207–232 (LFFCEFCLNFMKRKEQLQRHMKKCDL). K274 is subject to N6-acetyllysine; by autocatalysis. Acetyl-CoA-binding positions include 317-319 (ILT) and 324-330 (QRKGYGK). Residue E350 is the Proton donor/acceptor of the active site. S354 serves as a coordination point for acetyl-CoA.

The protein belongs to the MYST (SAS/MOZ) family. Post-translationally, autoacetylation at Lys-274 is required for proper function.

The protein localises to the nucleus. The catalysed reaction is L-lysyl-[protein] + acetyl-CoA = N(6)-acetyl-L-lysyl-[protein] + CoA + H(+). In terms of biological role, histone acetyltransferase which may be involved in transcriptional activation. In Oryza sativa subsp. japonica (Rice), this protein is Putative MYST-like histone acetyltransferase 1.